The primary structure comprises 504 residues: 2,3-bisphosphoglycerate-independent phosphoglycerate mutase (504 aa).

Mn(2+) is bound by residues Asp13 and Ser63. Ser63 serves as the catalytic Phosphoserine intermediate. Residues His124, 153-154, Arg183, Arg189, 254-257, and Lys330 contribute to the substrate site; these read RD and RADR. Mn(2+) is bound by residues Asp397, His401, Asp438, His439, and His457.

Belongs to the BPG-independent phosphoglycerate mutase family. In terms of assembly, monomer. Requires Mn(2+) as cofactor.

It carries out the reaction (2R)-2-phosphoglycerate = (2R)-3-phosphoglycerate. It participates in carbohydrate degradation; glycolysis; pyruvate from D-glyceraldehyde 3-phosphate: step 3/5. Catalyzes the interconversion of 2-phosphoglycerate and 3-phosphoglycerate. The sequence is that of 2,3-bisphosphoglycerate-independent phosphoglycerate mutase from Rhodopseudomonas palustris (strain ATCC BAA-98 / CGA009).